Consider the following 452-residue polypeptide: 3-phosphoshikimate 1-carboxyvinyltransferase (452 aa).

A compositionally biased stretch (low complexity) spans 1–17 (MSHAAAAKPATARKSQA). The tract at residues 1–26 (MSHAAAAKPATARKSQALSGTARVPG) is disordered. Residues K28, S29, and R33 each coordinate 3-phosphoshikimate. Residue K28 participates in phosphoenolpyruvate binding. Phosphoenolpyruvate-binding residues include G100 and R128. 3-phosphoshikimate-binding residues include S174, Q176, D327, and K354. Q176 is a phosphoenolpyruvate binding site. D327 (proton acceptor) is an active-site residue. Residues R358 and R409 each contribute to the phosphoenolpyruvate site.

It belongs to the EPSP synthase family. In terms of assembly, monomer.

The protein localises to the cytoplasm. The catalysed reaction is 3-phosphoshikimate + phosphoenolpyruvate = 5-O-(1-carboxyvinyl)-3-phosphoshikimate + phosphate. The protein operates within metabolic intermediate biosynthesis; chorismate biosynthesis; chorismate from D-erythrose 4-phosphate and phosphoenolpyruvate: step 6/7. In terms of biological role, catalyzes the transfer of the enolpyruvyl moiety of phosphoenolpyruvate (PEP) to the 5-hydroxyl of shikimate-3-phosphate (S3P) to produce enolpyruvyl shikimate-3-phosphate and inorganic phosphate. The chain is 3-phosphoshikimate 1-carboxyvinyltransferase from Mesorhizobium japonicum (strain LMG 29417 / CECT 9101 / MAFF 303099) (Mesorhizobium loti (strain MAFF 303099)).